The following is an 85-amino-acid chain: uncharacterized protein (85 aa).

2 disordered regions span residues 1 to 28 (MPQK…LRKA) and 35 to 54 (SKKK…SLTE). The span at 35–48 (SKKKSLQHLKKLKK) shows a compositional bias: basic residues.

It is found in the nucleus. This is an uncharacterized protein from Saccharomyces cerevisiae (strain ATCC 204508 / S288c) (Baker's yeast).